The chain runs to 123 residues: Holo-[acyl-carrier-protein] synthase (123 aa).

Mg(2+)-binding residues include D8 and E60.

Belongs to the P-Pant transferase superfamily. AcpS family. Requires Mg(2+) as cofactor.

It is found in the cytoplasm. The enzyme catalyses apo-[ACP] + CoA = holo-[ACP] + adenosine 3',5'-bisphosphate + H(+). Functionally, transfers the 4'-phosphopantetheine moiety from coenzyme A to a Ser of acyl-carrier-protein. In Wolbachia pipientis wMel, this protein is Holo-[acyl-carrier-protein] synthase.